The sequence spans 141 residues: VLSGTDKTNVKSIFSKIGGQADDYGAEALERMFVTYPQTKTYFPHFDVSPGSAQVKAHGKKVAGGLSEAANHIDDIATSLSKLSDLHAQKLRVDPVNFKLLGQCFLVVVAIHNPSALTPEAHASLDKFLCAVGLVLTAKYR.

Residues 1 to 141 (VLSGTDKTNV…VGLVLTAKYR (141 aa)) enclose the Globin domain. Histidine 58 is an O2 binding site. Position 87 (histidine 87) interacts with heme b.

This sequence belongs to the globin family. Heterotetramer of two alpha chains and two beta chains. As to expression, red blood cells.

Its function is as follows. Involved in oxygen transport from the lung to the various peripheral tissues. This chain is Hemoglobin subunit alpha (HBA), found in Psittacula krameri (Rose-ringed parakeet).